We begin with the raw amino-acid sequence, 283 residues long: Serine/threonine-protein phosphatase Pgam5, mitochondrial (283 aa).

The helical transmembrane segment at 7 to 23 threads the bilayer; that stretch reads MYGLPSAAVAVGTALLN.

This sequence belongs to the phosphoglycerate mutase family. BPG-dependent PGAM subfamily. In terms of assembly, interacts with skn-1.

Its subcellular location is the mitochondrion outer membrane. The catalysed reaction is O-phospho-L-seryl-[protein] + H2O = L-seryl-[protein] + phosphate. It carries out the reaction O-phospho-L-threonyl-[protein] + H2O = L-threonyl-[protein] + phosphate. Functionally, displays phosphatase activity for serine/threonine residues. Has apparently no phosphoglycerate mutase activity. This is Serine/threonine-protein phosphatase Pgam5, mitochondrial (pgam-5) from Caenorhabditis briggsae.